Here is an 84-residue protein sequence, read N- to C-terminus: Sulfur carrier protein TusA (84 aa).

The Cysteine persulfide intermediate role is filled by cysteine 19.

Belongs to the sulfur carrier protein TusA family. Interacts with IscS.

Its subcellular location is the cytoplasm. It participates in tRNA modification. Its function is as follows. Sulfur carrier protein involved in sulfur trafficking in the cell. Part of a sulfur-relay system required for 2-thiolation during synthesis of 2-thiouridine of the modified wobble base 5-methylaminomethyl-2-thiouridine (mnm(5)s(2)U) in tRNA. Interacts with IscS and stimulates its cysteine desulfurase activity. Accepts an activated sulfur from IscS, which is then transferred to TusD, and thus determines the direction of sulfur flow from IscS to 2-thiouridine formation. Also appears to be involved in sulfur transfer for the biosynthesis of molybdopterin. This Photorhabdus laumondii subsp. laumondii (strain DSM 15139 / CIP 105565 / TT01) (Photorhabdus luminescens subsp. laumondii) protein is Sulfur carrier protein TusA.